Reading from the N-terminus, the 221-residue chain is MKLRAVVLGLATLCTSTATFAGMVSTSSNLEFLAIDGQKASKSLGKAKTFTVDDTQSHQVVVRLNEIVGSGSNQSLFESNPVIVTFQGNAEDLVISAPAIRNLDSGDKFNQMPNITVKTKSGNAISAKVDVLKQEGLFPSGNVLNDLAEYNASGAAASVSKFTATTSANSMVAVPAGNAKANKGKVVVQGENVAEQQLQYWFQQADKETQTRFLNWAKSHK.

The N-terminal stretch at 1–21 is a signal peptide; sequence MKLRAVVLGLATLCTSTATFA.

This sequence belongs to the UPF0319 family.

The chain is UPF0319 protein NTHI1987 from Haemophilus influenzae (strain 86-028NP).